The chain runs to 958 residues: Glycine dehydrogenase (decarboxylating) (958 aa).

Lys705 bears the N6-(pyridoxal phosphate)lysine mark.

The protein belongs to the GcvP family. In terms of assembly, the glycine cleavage system is composed of four proteins: P, T, L and H. The cofactor is pyridoxal 5'-phosphate.

The catalysed reaction is N(6)-[(R)-lipoyl]-L-lysyl-[glycine-cleavage complex H protein] + glycine + H(+) = N(6)-[(R)-S(8)-aminomethyldihydrolipoyl]-L-lysyl-[glycine-cleavage complex H protein] + CO2. In terms of biological role, the glycine cleavage system catalyzes the degradation of glycine. The P protein binds the alpha-amino group of glycine through its pyridoxal phosphate cofactor; CO(2) is released and the remaining methylamine moiety is then transferred to the lipoamide cofactor of the H protein. The polypeptide is Glycine dehydrogenase (decarboxylating) (Bdellovibrio bacteriovorus (strain ATCC 15356 / DSM 50701 / NCIMB 9529 / HD100)).